The primary structure comprises 478 residues: Cytochrome c-552 (478 aa).

The N-terminal stretch at 1 to 26 is a signal peptide; sequence MTRIKINARRIFSLLIPFFFFTSVHA. His-94 lines the heme c pocket. The heme site is built by Cys-122, Cys-125, and Lys-126. Heme c-binding residues include Cys-160, Cys-163, His-164, Cys-209, Cys-212, and His-213. Positions 215, 216, 261, and 263 each coordinate Ca(2+). Substrate is bound at residue Tyr-216. A substrate-binding site is contributed by His-264. 9 residues coordinate heme c: His-275, Cys-282, Cys-285, His-286, His-301, Cys-314, Cys-317, His-318, and His-393.

Belongs to the cytochrome c-552 family. The cofactor is Ca(2+). Heme c serves as cofactor.

The protein localises to the periplasm. It catalyses the reaction 6 Fe(III)-[cytochrome c] + NH4(+) + 2 H2O = 6 Fe(II)-[cytochrome c] + nitrite + 8 H(+). The protein operates within nitrogen metabolism; nitrate reduction (assimilation). Functionally, catalyzes the reduction of nitrite to ammonia, consuming six electrons in the process. The protein is Cytochrome c-552 of Shigella flexneri.